A 521-amino-acid chain; its full sequence is Calcium-dependent protein kinase 33 (521 aa).

Residue Gly2 is the site of N-myristoyl glycine attachment. Residues 15-56 (PQQNGERSVEIENRRRSTHQDPSKISTGTNQPPPWRNPAKHS) are disordered. The segment covering 21-36 (RSVEIENRRRSTHQDP) has biased composition (basic and acidic residues). Residues 73 to 331 (YTLSKELGRG…AAEVLKHPWL (259 aa)) form the Protein kinase domain. ATP-binding positions include 79-87 (LGRGQFGVT) and Lys102. Catalysis depends on Asp197, which acts as the Proton acceptor. Ser237 carries the phosphoserine modification. Positions 337 to 367 (ASDKPIDSAVLSRMKQFRAMNKLKKLALKVI) are autoinhibitory domain. 4 EF-hand domains span residues 374 to 409 (EEIQ…LGSR), 410 to 445 (LTEA…RHRL), 446 to 481 (ESNE…YGMG), and 482 to 516 (DDAT…GNPQ). The Ca(2+) site is built by Asp387, Asp389, Ser391, Thr393, Glu398, Asp423, Asp425, Asn427, Ser429, Glu434, Asp459, Asp461, Ser463, Tyr465, Glu470, Asp494, Asp496, Asp498, Arg500, and Glu505.

Belongs to the protein kinase superfamily. Ser/Thr protein kinase family. CDPK subfamily. In terms of assembly, interacts with THI1. Interacts with FD and FDP. In terms of processing, autophosphorylated. In terms of tissue distribution, expressed in primary roots, leaves, inflorescences, siliques and guard cells. Expressed in the shoot apical meristem.

It localises to the cell membrane. Its subcellular location is the nucleus. It is found in the cytoplasm. It carries out the reaction L-seryl-[protein] + ATP = O-phospho-L-seryl-[protein] + ADP + H(+). It catalyses the reaction L-threonyl-[protein] + ATP = O-phospho-L-threonyl-[protein] + ADP + H(+). With respect to regulation, activated by calcium. Autophosphorylation may play an important role in the regulation of the kinase activity. Repressed by THI1 through a negative regulation of the autophosphorylation activity in the presence of Ca(2+). Functionally, ca(2+)-dependent protein kinase. Negative regulator of stomatal closure and slow anion currents. Unable to phosphorylate THI1 in vitro, but the kinase activity is essential for the stomatal closure regulation. Phosphorylates FD. May play a role in signal transduction pathways that involve calcium as a second messenger. This is Calcium-dependent protein kinase 33 from Arabidopsis thaliana (Mouse-ear cress).